Consider the following 469-residue polypeptide: Glutamate--tRNA ligase 2 (469 aa).

A 'HIGH' region motif is present at residues 11-21 (PSPTGHLHLGG). The 'KMSKS' region signature appears at 238-242 (KLSKR). Residue Lys241 coordinates ATP.

The protein belongs to the class-I aminoacyl-tRNA synthetase family. Glutamate--tRNA ligase type 1 subfamily. As to quaternary structure, monomer.

Its subcellular location is the cytoplasm. It carries out the reaction tRNA(Glu) + L-glutamate + ATP = L-glutamyl-tRNA(Glu) + AMP + diphosphate. Functionally, catalyzes the attachment of glutamate to tRNA(Glu) in a two-step reaction: glutamate is first activated by ATP to form Glu-AMP and then transferred to the acceptor end of tRNA(Glu). The protein is Glutamate--tRNA ligase 2 of Ehrlichia chaffeensis (strain ATCC CRL-10679 / Arkansas).